Reading from the N-terminus, the 131-residue chain is Small ribosomal subunit protein uS11 (131 aa).

Belongs to the universal ribosomal protein uS11 family. In terms of assembly, part of the 30S ribosomal subunit. Interacts with proteins S7 and S18. Binds to IF-3.

In terms of biological role, located on the platform of the 30S subunit, it bridges several disparate RNA helices of the 16S rRNA. Forms part of the Shine-Dalgarno cleft in the 70S ribosome. This chain is Small ribosomal subunit protein uS11, found in Geobacter metallireducens (strain ATCC 53774 / DSM 7210 / GS-15).